A 248-amino-acid chain; its full sequence is Pulmonary surfactant-associated protein A (248 aa).

A signal peptide spans Met1–Gly17. In terms of domain architecture, Collagen-like spans Gly28–Pro100. A disordered region spans residues Ser29–Leu103. The segment covering Pro42–Lys51 has biased composition (basic and acidic residues). The span at Pro54–Gly65 shows a compositional bias: pro residues. Residues Leu69–Pro82 show a composition bias toward low complexity. The span at Glu84 to Glu93 shows a compositional bias: basic and acidic residues. The C-type lectin domain occupies Leu127–Glu247. 2 disulfides stabilise this stretch: Cys155/Cys246 and Cys224/Cys238. Asn207 carries an N-linked (GlcNAc...) asparagine glycan. Positions 215, 217, 234, and 235 each coordinate Ca(2+).

Belongs to the SFTPA family. As to quaternary structure, oligomeric complex of 6 set of homotrimers.

Its subcellular location is the secreted. The protein resides in the extracellular space. It localises to the extracellular matrix. The protein localises to the surface film. Its function is as follows. In presence of calcium ions, it binds to surfactant phospholipids and contributes to lower the surface tension at the air-liquid interface in the alveoli of the mammalian lung and is essential for normal respiration. Enhances the expression of MYO18A/SP-R210 on alveolar macrophages. This is Pulmonary surfactant-associated protein A (SFTPA1) from Ovis aries (Sheep).